Reading from the N-terminus, the 527-residue chain is Peptide chain release factor 3 (527 aa).

The tr-type G domain occupies 9–278; it reads DIRRTFAIIS…GLTQWAPKPQ (270 aa). Residues 18–25, 86–90, and 140–143 contribute to the GTP site; these read SHPDAGKT, DTPGH, and NKCD.

Belongs to the TRAFAC class translation factor GTPase superfamily. Classic translation factor GTPase family. PrfC subfamily.

Its subcellular location is the cytoplasm. In terms of biological role, increases the formation of ribosomal termination complexes and stimulates activities of RF-1 and RF-2. It binds guanine nucleotides and has strong preference for UGA stop codons. It may interact directly with the ribosome. The stimulation of RF-1 and RF-2 is significantly reduced by GTP and GDP, but not by GMP. The sequence is that of Peptide chain release factor 3 from Shewanella denitrificans (strain OS217 / ATCC BAA-1090 / DSM 15013).